A 231-amino-acid chain; its full sequence is MFVWHEYENAAEAAQSLADAVADALQGALDEKGGAVLAVSGGRSPIAFFNALSQKDLDWKNVGITLADERIVPTVHADSNTGLVREYLLKNKAEAAMWIPMVEDGKTETELHPDAVVDYALKHYKQPDVLVLGMGNDGHTASIFPKAPQFQTAIDGSAGVALVHTTPVTAPHERVSMTLDAIAHTGHVFLAIRGEEKKAVFDQAAQGENREYPINLVLNHQGVNCHVFYAE.

The protein belongs to the glucosamine/galactosamine-6-phosphate isomerase family. 6-phosphogluconolactonase subfamily.

It carries out the reaction 6-phospho-D-glucono-1,5-lactone + H2O = 6-phospho-D-gluconate + H(+). Its pathway is carbohydrate degradation; pentose phosphate pathway; D-ribulose 5-phosphate from D-glucose 6-phosphate (oxidative stage): step 2/3. Hydrolysis of 6-phosphogluconolactone to 6-phosphogluconate. This Neisseria meningitidis serogroup A / serotype 4A (strain DSM 15465 / Z2491) protein is 6-phosphogluconolactonase (pgl).